Reading from the N-terminus, the 156-residue chain is Lipoprotein signal peptidase (156 aa).

Transmembrane regions (helical) follow at residues 5 to 25, 64 to 84, and 89 to 109; these read FKFI…DQWV, YLHL…KTLL, and IAFG…FIHG. Catalysis depends on residues Asp-113 and Asp-130. A helical membrane pass occupies residues 122 to 142; sequence NFAIFNVADVMINISVALILI.

Belongs to the peptidase A8 family.

The protein localises to the cell inner membrane. It carries out the reaction Release of signal peptides from bacterial membrane prolipoproteins. Hydrolyzes -Xaa-Yaa-Zaa-|-(S,diacylglyceryl)Cys-, in which Xaa is hydrophobic (preferably Leu), and Yaa (Ala or Ser) and Zaa (Gly or Ala) have small, neutral side chains.. It functions in the pathway protein modification; lipoprotein biosynthesis (signal peptide cleavage). Its function is as follows. This protein specifically catalyzes the removal of signal peptides from prolipoproteins. This is Lipoprotein signal peptidase from Campylobacter jejuni subsp. jejuni serotype O:23/36 (strain 81-176).